The sequence spans 585 residues: Type IV pilus assembly ATPase TfpB (585 aa).

346-351 (GSGKTT) is an ATP binding site. Cys-476, Cys-479, Cys-511, and Cys-514 together coordinate Zn(2+).

The protein belongs to the GSP E family.

It is found in the cytoplasm. Its function is as follows. ATPase component of the type IV pilus (T4P). Acts as a molecular motor to provide the energy that is required for biogenesis of the pilus and the extrusion of substrates generated in the cytoplasm. TfpB is required for optimal T4P extension and, consequently, efficient natural transformation. May play a role in initiating T4P extension. The chain is Type IV pilus assembly ATPase TfpB from Acinetobacter baylyi (strain ATCC 33305 / BD413 / ADP1).